Here is a 150-residue protein sequence, read N- to C-terminus: UPF0098 protein TC_0109 (150 aa).

It belongs to the UPF0098 family.

The chain is UPF0098 protein TC_0109 from Chlamydia muridarum (strain MoPn / Nigg).